We begin with the raw amino-acid sequence, 370 residues long: tRNA-specific 2-thiouridylase MnmA (370 aa).

Residues 9–16 and M35 each bind ATP; that span reads GMSGGVDS. Positions 95–97 are interaction with target base in tRNA; it reads NPD. C100 (nucleophile) is an active-site residue. The cysteines at positions 100 and 196 are disulfide-linked. G124 contacts ATP. The interval 146–148 is interaction with tRNA; the sequence is KDQ. C196 serves as the catalytic Cysteine persulfide intermediate. The tract at residues 308–309 is interaction with tRNA; it reads RY.

The protein belongs to the MnmA/TRMU family.

The protein localises to the cytoplasm. The catalysed reaction is S-sulfanyl-L-cysteinyl-[protein] + uridine(34) in tRNA + AH2 + ATP = 2-thiouridine(34) in tRNA + L-cysteinyl-[protein] + A + AMP + diphosphate + H(+). Its function is as follows. Catalyzes the 2-thiolation of uridine at the wobble position (U34) of tRNA, leading to the formation of s(2)U34. The chain is tRNA-specific 2-thiouridylase MnmA from Ralstonia nicotianae (strain ATCC BAA-1114 / GMI1000) (Ralstonia solanacearum).